Here is a 561-residue protein sequence, read N- to C-terminus: DNA ligase B (561 aa).

The active-site N6-AMP-lysine intermediate is the K125.

This sequence belongs to the NAD-dependent DNA ligase family. LigB subfamily.

It catalyses the reaction NAD(+) + (deoxyribonucleotide)n-3'-hydroxyl + 5'-phospho-(deoxyribonucleotide)m = (deoxyribonucleotide)n+m + AMP + beta-nicotinamide D-nucleotide.. Catalyzes the formation of phosphodiester linkages between 5'-phosphoryl and 3'-hydroxyl groups in double-stranded DNA using NAD as a coenzyme and as the energy source for the reaction. The protein is DNA ligase B of Salmonella enteritidis PT4 (strain P125109).